The primary structure comprises 127 residues: MEDENILRNAVNLQVLKFHYPEIESIIDIASHVAVYQFDVGSQKWLKTSIEGTFFLVKDQRARVGYVILNRNSPENLYLFINHPSNVHLVDRYLIHRTENQHVVGLWMFDPNDMSRIFNIVKESLLR.

This sequence belongs to the DCP1 family. As to quaternary structure, component of the decapping complex composed of dcp1 and dcp2.

The protein resides in the cytoplasm. It is found in the nucleus. Functionally, component of the decapping complex necessary for the degradation of mRNAs, both in normal mRNA turnover and in nonsense-mediated mRNA decay. Removes the 7-methyl guanine cap structure from mRNA molecules, yielding a 5'-phosphorylated mRNA fragment and 7m-GDP. Decapping is the major pathway of mRNA degradation in yeast. It occurs through deadenylation, decapping and subsequent 5' to 3' exonucleolytic decay of the transcript body. This chain is mRNA-decapping enzyme subunit 1 (dcp1), found in Schizosaccharomyces pombe (strain 972 / ATCC 24843) (Fission yeast).